Reading from the N-terminus, the 573-residue chain is PCNA-interacting partner (573 aa).

The tract at residues 463–511 (VSEGAQPSVGKARLETSSENVHVDRSKDDKGPRKSTKRKLAKSKQPGVR) is disordered. The span at 474 to 494 (ARLETSSENVHVDRSKDDKGP) shows a compositional bias: basic and acidic residues. The span at 495–504 (RKSTKRKLAK) shows a compositional bias: basic residues.

This sequence belongs to the PARI family. As to quaternary structure, interacts with RAD51 and PCNA. Interacts with PARP1. Interacts with TASOR. In terms of tissue distribution, present in testis (at protein level). Expressed in testis, gastrointestinal tract (jejunum, ileum, and colon) and immune system (thymus and spleen). Weakly expressed in lung, kidney, pituitary gland and muscle.

It is found in the cytoplasm. The protein localises to the nucleus. Required to suppress inappropriate homologous recombination, thereby playing a central role DNA repair and in the maintenance of genomic stability. Antagonizes homologous recombination by interfering with the formation of the RAD51-DNA homologous recombination structure. Positively regulate the poly(ADP-ribosyl)ation activity of PARP1; however such function may be indirect. Binds single-strand DNA and poly(A) homopolymers. The sequence is that of PCNA-interacting partner (Parpbp) from Rattus norvegicus (Rat).